The primary structure comprises 126 residues: Large ribosomal subunit protein bL12 (126 aa).

This sequence belongs to the bacterial ribosomal protein bL12 family. In terms of assembly, homodimer. Part of the ribosomal stalk of the 50S ribosomal subunit. Forms a multimeric L10(L12)X complex, where L10 forms an elongated spine to which 2 to 4 L12 dimers bind in a sequential fashion. Binds GTP-bound translation factors.

Its function is as follows. Forms part of the ribosomal stalk which helps the ribosome interact with GTP-bound translation factors. Is thus essential for accurate translation. The chain is Large ribosomal subunit protein bL12 from Prosthecochloris aestuarii (strain DSM 271 / SK 413).